We begin with the raw amino-acid sequence, 260 residues long: MSQRTRLSVNVNKIAVLRNSRGDGAPDVIRAASACIDAGAHGITVHPRPDARHIRHDDVIGLSALTRARGVEFNIEGNPFAEPRAGYCGLLALCRETRPHQVTLVPDGDQQITSDHGFDFAREGPGLRPLIDEIKQWGCRVSLFVDVNVTGLADAAIWGVDRIELYTGPYAEMHHAGCSDAVLREFATTARLAQDVGLGVNAGHDLSQTNLGVFLGAVPDVLEVSIGHALISEALYEGLVPTVRRYLDILDSVNPAVSMR.

Positions 10 and 21 each coordinate 3-amino-2-oxopropyl phosphate. Residue H46 is the Proton acceptor of the active site. The 1-deoxy-D-xylulose 5-phosphate site is built by R48 and H53. E76 (proton acceptor) is an active-site residue. Residue T113 participates in 1-deoxy-D-xylulose 5-phosphate binding. H204 functions as the Proton donor in the catalytic mechanism. Residues D205 and 227 to 228 contribute to the 3-amino-2-oxopropyl phosphate site; that span reads GH.

It belongs to the PNP synthase family. As to quaternary structure, homooctamer; tetramer of dimers.

It is found in the cytoplasm. The catalysed reaction is 3-amino-2-oxopropyl phosphate + 1-deoxy-D-xylulose 5-phosphate = pyridoxine 5'-phosphate + phosphate + 2 H2O + H(+). Its pathway is cofactor biosynthesis; pyridoxine 5'-phosphate biosynthesis; pyridoxine 5'-phosphate from D-erythrose 4-phosphate: step 5/5. In terms of biological role, catalyzes the complicated ring closure reaction between the two acyclic compounds 1-deoxy-D-xylulose-5-phosphate (DXP) and 3-amino-2-oxopropyl phosphate (1-amino-acetone-3-phosphate or AAP) to form pyridoxine 5'-phosphate (PNP) and inorganic phosphate. The protein is Pyridoxine 5'-phosphate synthase of Xylella fastidiosa (strain 9a5c).